The following is a 122-amino-acid chain: Large ribosomal subunit protein bL12 (122 aa).

This sequence belongs to the bacterial ribosomal protein bL12 family. In terms of assembly, homodimer. Part of the ribosomal stalk of the 50S ribosomal subunit. Forms a multimeric L10(L12)X complex, where L10 forms an elongated spine to which 2 to 4 L12 dimers bind in a sequential fashion. Binds GTP-bound translation factors.

Forms part of the ribosomal stalk which helps the ribosome interact with GTP-bound translation factors. Is thus essential for accurate translation. This is Large ribosomal subunit protein bL12 from Stenotrophomonas maltophilia (strain K279a).